The following is a 349-amino-acid chain: Protein BCCIP homolog (349 aa).

A compositionally biased stretch (basic residues) spans 1-10 (MGRVFKKKGG). Residues 1 to 65 (MGRVFKKKGG…DDEEEDEDEQ (65 aa)) are disordered. Over residues 11–33 (AKREAEEEKQEELVMRKKLRKEE) the composition is skewed to basic and acidic residues. Residues 34 to 65 (EPEPVEDVEEDEDVSDEDDEDIDDEEEDEDEQ) show a composition bias toward acidic residues.

The protein belongs to the BCP1 family.

The protein is Protein BCCIP homolog of Caenorhabditis elegans.